A 404-amino-acid chain; its full sequence is NADH-quinone oxidoreductase subunit D 2 (404 aa).

This sequence belongs to the complex I 49 kDa subunit family. NDH-1 is composed of 14 different subunits. Subunits NuoB, C, D, E, F, and G constitute the peripheral sector of the complex.

Its subcellular location is the cell inner membrane. It catalyses the reaction a quinone + NADH + 5 H(+)(in) = a quinol + NAD(+) + 4 H(+)(out). Its function is as follows. NDH-1 shuttles electrons from NADH, via FMN and iron-sulfur (Fe-S) centers, to quinones in the respiratory chain. The immediate electron acceptor for the enzyme in this species is believed to be ubiquinone. Couples the redox reaction to proton translocation (for every two electrons transferred, four hydrogen ions are translocated across the cytoplasmic membrane), and thus conserves the redox energy in a proton gradient. The chain is NADH-quinone oxidoreductase subunit D 2 from Rhizobium etli (strain CIAT 652).